A 376-amino-acid polypeptide reads, in one-letter code: Chaperone protein DnaJ (376 aa).

The region spanning 5 to 70 (DYYETLGVQK…EKRAAYDQYG (66 aa)) is the J domain. Residues 133–211 (GTTKDIKINT…CHGDGRVHKK (79 aa)) form a CR-type zinc finger. Cys146, Cys149, Cys163, Cys166, Cys185, Cys188, Cys199, and Cys202 together coordinate Zn(2+). 4 CXXCXGXG motif repeats span residues 146 to 153 (CDHCDGSG), 163 to 170 (CPTCHGHG), 185 to 192 (CPTCQGSG), and 199 to 206 (CKHCHGDG).

This sequence belongs to the DnaJ family. As to quaternary structure, homodimer. The cofactor is Zn(2+).

It localises to the cytoplasm. In terms of biological role, participates actively in the response to hyperosmotic and heat shock by preventing the aggregation of stress-denatured proteins and by disaggregating proteins, also in an autonomous, DnaK-independent fashion. Unfolded proteins bind initially to DnaJ; upon interaction with the DnaJ-bound protein, DnaK hydrolyzes its bound ATP, resulting in the formation of a stable complex. GrpE releases ADP from DnaK; ATP binding to DnaK triggers the release of the substrate protein, thus completing the reaction cycle. Several rounds of ATP-dependent interactions between DnaJ, DnaK and GrpE are required for fully efficient folding. Also involved, together with DnaK and GrpE, in the DNA replication of plasmids through activation of initiation proteins. The polypeptide is Chaperone protein DnaJ (Mannheimia succiniciproducens (strain KCTC 0769BP / MBEL55E)).